A 161-amino-acid chain; its full sequence is Protein-export protein SecB (161 aa).

This sequence belongs to the SecB family. Homotetramer, a dimer of dimers. One homotetramer interacts with 1 SecA dimer.

The protein localises to the cytoplasm. In terms of biological role, one of the proteins required for the normal export of preproteins out of the cell cytoplasm. It is a molecular chaperone that binds to a subset of precursor proteins, maintaining them in a translocation-competent state. It also specifically binds to its receptor SecA. The protein is Protein-export protein SecB of Shewanella baltica (strain OS223).